Here is a 139-residue protein sequence, read N- to C-terminus: D-ribose pyranase (139 aa).

The Proton donor role is filled by H20. Substrate is bound by residues D28, H106, and 128–130 (YAN).

It belongs to the RbsD / FucU family. RbsD subfamily. As to quaternary structure, homodecamer.

It localises to the cytoplasm. The enzyme catalyses beta-D-ribopyranose = beta-D-ribofuranose. Its pathway is carbohydrate metabolism; D-ribose degradation; D-ribose 5-phosphate from beta-D-ribopyranose: step 1/2. Its function is as follows. Catalyzes the interconversion of beta-pyran and beta-furan forms of D-ribose. This Citrobacter koseri (strain ATCC BAA-895 / CDC 4225-83 / SGSC4696) protein is D-ribose pyranase.